Here is an 844-residue protein sequence, read N- to C-terminus: Striatin-interacting proteins 2 (844 aa).

The segment covering 1–18 (MDDPAAPGPAGSPANDNG) has biased composition (low complexity). The segment at 1–58 (MDDPAAPGPAGSPANDNGNGNGNGNGNGNGGKGKPAVPKGRETFRNQRRESEGSVDCP) is disordered. The segment covering 19-33 (NGNGNGNGNGNGGKG) has biased composition (gly residues). A compositionally biased stretch (basic and acidic residues) spans 39 to 52 (KGRETFRNQRRESE). Residues Ser-328, Ser-339, and Ser-364 each carry the phosphoserine modification. The segment at 331-355 (SYTLDLGESQLAPPPSKLRGRRGSR) is disordered. Residues 370–422 (ERDLFKTEEPATEEEEESAADGERTLDGELDLLEQDPLVPPPPSQTPLSTDRV) form a disordered region. The segment covering 379–389 (PATEEEEESAA) has biased composition (acidic residues).

The protein belongs to the STRIP family. Part of the core of STRIPAK complexes composed of PP2A catalytic and scaffolding subunits, the striatins (PP2A regulatory subunits), the striatin-associated proteins MOB4, STRIP1 and STRIP2, PDCD10 and members of the STE20 kinases, such as STK24 and STK26. Interacts with CTTNBP2NL.

The protein localises to the cytoplasm. In terms of biological role, plays a role in the regulation of cell morphology and cytoskeletal organization. Required in the control of cell shape. Calmodulin-binding scaffolding protein which is the center of the striatin-interacting phosphatase and kinase (STRIPAK) complexes. STRIPAK complexes have critical roles in protein (de)phosphorylation and are regulators of multiple signaling pathways including Hippo, MAPK, nuclear receptor and cytoskeleton remodeling. Different types of STRIPAK complexes are involved in a variety of biological processes such as cell growth, differentiation, apoptosis, metabolism and immune regulation. In Mus musculus (Mouse), this protein is Striatin-interacting proteins 2 (Strip2).